Reading from the N-terminus, the 554-residue chain is Acetyl-S-ACP:malonate ACP transferase (554 aa).

The protein localises to the cytoplasm. It catalyses the reaction acetyl-[ACP] + malonate = malonyl-[ACP] + acetate. Its function is as follows. Alpha subunit of the biotin-independent and biotin-dependent malonate decarboxylase multienzyme complex (EC 4.1.1.88 and EC 7.2.4.4, respectively). Acts as an acyl-carrier protein (ACP) transferase component. This first step in malonate decarboxylation involves the exchange of an acetyl thioester residue bound to the activated ACP subunit for a malonyl thioester residue. Has a weak activity with acetyl-CoA as substrate. This chain is Acetyl-S-ACP:malonate ACP transferase (madA), found in Malonomonas rubra.